A 421-amino-acid chain; its full sequence is MLTKKKWALFSLLTLCGGTIYKLPSLKDAFYIPMQEYFHLTNGQIGNAMSVNSFVTTVGFFLSIYFADKLPRRYTMSFSLIATGLLGVYLTTMPGYWGILFVWALFGVTCDMMNWPVLLKSVSRLGNSEQQGRLFGFFETGRGIVDTVVAFSALAVFTWFGSGLLGFKAGIWFYSLIVIAVGIIIFFVLNDKEEAPSVEVKKEDGASKNTSMTSVLKDKTIWLIAFNVFFVYAVYCGLTFFIPFLKNIYLLPVALVGAYGIINQYCLKMIGGPIGGMISDKILKSPSKYLCYTFIISTAALVLLIMLPHESMPVYLGMACTLGFGAIVFTQRAVFFAPIGEAKIAENKTGAAMALGSFIGYAPAMFCFSLYGYILDLNPGIIGYKIVFGIMACFAFSGAVVSVMLVKRISQRKKEMLAAEA.

At 1–44 the chain is on the periplasmic side; it reads MLTKKKWALFSLLTLCGGTIYKLPSLKDAFYIPMQEYFHLTNGQ. The chain crosses the membrane as a helical span at residues 45 to 65; it reads IGNAMSVNSFVTTVGFFLSIY. The Cytoplasmic portion of the chain corresponds to 66 to 73; that stretch reads FADKLPRR. Residues 74–91 form a helical membrane-spanning segment; the sequence is YTMSFSLIATGLLGVYLT. The Periplasmic segment spans residues 92–95; it reads TMPG. Residues 96-118 traverse the membrane as a helical segment; that stretch reads YWGILFVWALFGVTCDMMNWPVL. Residues 119–146 are Cytoplasmic-facing; the sequence is LKSVSRLGNSEQQGRLFGFFETGRGIVD. A helical transmembrane segment spans residues 147 to 167; that stretch reads TVVAFSALAVFTWFGSGLLGF. Lysine 168 is a topological domain (periplasmic). Residues 169–189 traverse the membrane as a helical segment; the sequence is AGIWFYSLIVIAVGIIIFFVL. The Cytoplasmic segment spans residues 190–220; the sequence is NDKEEAPSVEVKKEDGASKNTSMTSVLKDKT. 2 helical membrane-spanning segments follow: residues 221–241 and 242–262; these read IWLI…LTFF and IPFL…YGII. Topologically, residues 263–288 are cytoplasmic; the sequence is NQYCLKMIGGPIGGMISDKILKSPSK. Transmembrane regions (helical) follow at residues 289 to 309 and 310 to 330; these read YLCY…MLPH and ESMP…IVFT. At 331-354 the chain is on the cytoplasmic side; that stretch reads QRAVFFAPIGEAKIAENKTGAAMA. A helical transmembrane segment spans residues 355-375; sequence LGSFIGYAPAMFCFSLYGYIL. The Periplasmic segment spans residues 376-385; it reads DLNPGIIGYK. A helical transmembrane segment spans residues 386–406; the sequence is IVFGIMACFAFSGAVVSVMLV. At 407–421 the chain is on the cytoplasmic side; sequence KRISQRKKEMLAAEA.

This sequence belongs to the major facilitator superfamily.

The protein resides in the cell inner membrane. This chain is Inner membrane protein YihN (yihN), found in Escherichia coli (strain K12).